The chain runs to 493 residues: MGTAKVTPSLVFAVTVATIGSFQFGYNTGVINAPETIIKDFLNYTLEERLEDLPREGLLTTLWSLCVAIFSVGGMIGSFSVGLFVNRFGRRNSMLLVNLIAILGGCLMGFAKIAESVEMLILGRLIIGIFCGLCTGFVPMYIGEVSPTALRGAFGTLNQLGIVVGILVAQVFGLDFILGSEELWPGLLGLTIIPAILQSAALPFCPESPRFLLINRKEEDQATEILQRLWGTPDVIQEIQEMKDESIRMSQEKQVTVLELFKSPSYFQPLLISVVLQLSQQFSGINAVFYYSTGIFQDAGVQEPIYATIGAGVVNTIFTVVSLFLVERAGRRTLHMIGLGGMAVCSVFMTISLLLKDEYEAMSFVCIVAILVYVAFFEIGPGPIPWFIVAELFSQGPRPAAMAVAGCSNWTSNFLVGMFFPSAAAYLGAYVFIIFAAFLVFFLIFTSFKVPETKGRTFEDITRAFEGQAHSGKGSAGVELNSMQPVKETPGNA.

Topologically, residues 1 to 10 (MGTAKVTPSL) are cytoplasmic. The helical transmembrane segment at 11–32 (VFAVTVATIGSFQFGYNTGVIN) threads the bilayer. The Extracellular portion of the chain corresponds to 33–64 (APETIIKDFLNYTLEERLEDLPREGLLTTLWS). N43 carries an N-linked (GlcNAc...) asparagine glycan. Residues 65–85 (LCVAIFSVGGMIGSFSVGLFV) traverse the membrane as a helical segment. Topologically, residues 86-90 (NRFGR) are cytoplasmic. A helical membrane pass occupies residues 91 to 111 (RNSMLLVNLIAILGGCLMGFA). Topologically, residues 112–118 (KIAESVE) are extracellular. The chain crosses the membrane as a helical span at residues 119-142 (MLILGRLIIGIFCGLCTGFVPMYI). Topologically, residues 143–153 (GEVSPTALRGA) are cytoplasmic. A helical transmembrane segment spans residues 154 to 174 (FGTLNQLGIVVGILVAQVFGL). Residue Q159 participates in D-glucose binding. The Extracellular segment spans residues 175 to 183 (DFILGSEEL). Residues 184-204 (WPGLLGLTIIPAILQSAALPF) form a helical membrane-spanning segment. The Cytoplasmic portion of the chain corresponds to 205–269 (CPESPRFLLI…LFKSPSYFQP (65 aa)). T232 bears the Phosphothreonine mark. Residues 270-290 (LLISVVLQLSQQFSGINAVFY) traverse the membrane as a helical segment. The important for selectivity against fructose stretch occupies residues 277–279 (QLS). Residues 280–281 (QQ) and N286 each bind D-glucose. Over 291–304 (YSTGIFQDAGVQEP) the chain is Extracellular. Residues 305-325 (IYATIGAGVVNTIFTVVSLFL) form a helical membrane-spanning segment. N315 is a binding site for D-glucose. Residues 326–331 (VERAGR) are Cytoplasmic-facing. Residues 332 to 352 (RTLHMIGLGGMAVCSVFMTIS) form a helical membrane-spanning segment. Residues 353–363 (LLLKDEYEAMS) are Extracellular-facing. A helical membrane pass occupies residues 364–389 (FVCIVAILVYVAFFEIGPGPIPWFIV). Residues E378 and W386 each contribute to the D-glucose site. Residues 390-399 (AELFSQGPRP) lie on the Cytoplasmic side of the membrane. A helical transmembrane segment spans residues 400–420 (AAMAVAGCSNWTSNFLVGMFF). At 421-429 (PSAAAYLGA) the chain is on the extracellular side. A helical transmembrane segment spans residues 430–450 (YVFIIFAAFLVFFLIFTSFKV). The Cytoplasmic portion of the chain corresponds to 451–493 (PETKGRTFEDITRAFEGQAHSGKGSAGVELNSMQPVKETPGNA). 3 positions are modified to phosphoserine: S471, S475, and S482. A Phosphothreonine modification is found at T489.

It belongs to the major facilitator superfamily. Sugar transporter (TC 2.A.1.1) family. Glucose transporter subfamily. Interacts with SMIM43; the interaction may promote SLC2A3-mediated glucose transport to meet the energy needs of mesendoderm differentiation. Brain and osteoblastic cells (at protein level). Highly expressed in brain.

It localises to the cell membrane. The protein localises to the perikaryon. Its subcellular location is the cell projection. The enzyme catalyses D-glucose(out) = D-glucose(in). The catalysed reaction is D-galactose(in) = D-galactose(out). With respect to regulation, deoxyglucose transport is inhibited by D-glucose, D-galactose and maltose. Galactose transport is inhibited by D-glucose and maltose. Its function is as follows. Facilitative glucose transporter. Can also mediate the uptake of various other monosaccharides across the cell membrane. Mediates the uptake of glucose, 2-deoxyglucose, galactose, mannose, xylose and fucose, and probably also dehydroascorbate. Does not mediate fructose transport. Required for mesendoderm differentiation. The chain is Solute carrier family 2, facilitated glucose transporter member 3 from Rattus norvegicus (Rat).